The following is a 428-amino-acid chain: D-amino acid dehydrogenase (428 aa).

3–17 (VVILGSGVVGVASAY) is an FAD binding site.

The protein belongs to the DadA oxidoreductase family. The cofactor is FAD.

The enzyme catalyses a D-alpha-amino acid + A + H2O = a 2-oxocarboxylate + AH2 + NH4(+). It functions in the pathway amino-acid degradation; D-alanine degradation; NH(3) and pyruvate from D-alanine: step 1/1. Its function is as follows. Oxidative deamination of D-amino acids. The polypeptide is D-amino acid dehydrogenase (Burkholderia multivorans (strain ATCC 17616 / 249)).